The sequence spans 58 residues: MGGLQTTGYAENASFSQLSACFSSRLVREDLFLMFSAYNQFTLLHSRLTMISYNGDDQ.

This is an uncharacterized protein from Bacillus subtilis (strain 168).